The chain runs to 644 residues: Protein FAM149B1 (644 aa).

3 disordered regions span residues 392–490, 551–575, and 609–644; these read NQSD…NTLL, TFRS…RPGR, and GHFP…RPGL. Residues 395–404 show a composition bias toward basic and acidic residues; the sequence is DCRDSEDKVS. The segment covering 449–459 has biased composition (polar residues); it reads PITSSVTQPIT. The segment covering 626–644 has biased composition (polar residues); sequence QARSHNRGGSTARSSRPGL.

This sequence belongs to the FAM149 family.

The protein is Protein FAM149B1 (fam149b1) of Danio rerio (Zebrafish).